Reading from the N-terminus, the 224-residue chain is ATP-dependent dethiobiotin synthetase BioD (224 aa).

14–19 contributes to the ATP binding site; sequence GIGKTV. Thr18 contacts Mg(2+). Residue Lys39 is part of the active site. Ser43 lines the substrate pocket. Residues Asp56, 117-120, and 177-178 contribute to the ATP site; these read EGVG and NE. Asp56 and Glu117 together coordinate Mg(2+).

It belongs to the dethiobiotin synthetase family. As to quaternary structure, homodimer. Mg(2+) is required as a cofactor.

It localises to the cytoplasm. It carries out the reaction (7R,8S)-7,8-diammoniononanoate + CO2 + ATP = (4R,5S)-dethiobiotin + ADP + phosphate + 3 H(+). It participates in cofactor biosynthesis; biotin biosynthesis; biotin from 7,8-diaminononanoate: step 1/2. Catalyzes a mechanistically unusual reaction, the ATP-dependent insertion of CO2 between the N7 and N8 nitrogen atoms of 7,8-diaminopelargonic acid (DAPA, also called 7,8-diammoniononanoate) to form a ureido ring. The sequence is that of ATP-dependent dethiobiotin synthetase BioD from Xanthomonas campestris pv. campestris (strain 8004).